A 208-amino-acid chain; its full sequence is Cytochrome c oxidase assembly protein CtaG (208 aa).

Topologically, residues 1–19 are cytoplasmic; sequence MKQRPTGPDTTPRNRRGFG. A helical; Signal-anchor for type II membrane protein transmembrane segment spans residues 20-42; sequence RDTAVASVCGLVVALMVGASYAA. Residues 43–208 lie on the Periplasmic side of the membrane; it reads VPFYNWFCRV…SEAGPRQGAL (166 aa).

The protein belongs to the COX11/CtaG family.

It localises to the cell inner membrane. Functionally, exerts its effect at some terminal stage of cytochrome c oxidase synthesis, probably by being involved in the insertion of the copper B into subunit I. The polypeptide is Cytochrome c oxidase assembly protein CtaG (Rhodopseudomonas palustris (strain BisA53)).